The sequence spans 208 residues: RNA-binding protein KhpB (208 aa).

The interval 5–55 (TAAGRNVDEAVQSGLQELGLTKDKVEITVIEEGNKGFLGIFGKKPAIVKLV) is jag_N domain. The KH domain occupies 58–135 (IDPIQQAKLY…GQYKNVTVDA (78 aa)). Residues 140–208 (LKRKETLSQL…NRHLVISHKR (69 aa)) form the R3H domain.

It belongs to the KhpB RNA-binding protein family. As to quaternary structure, forms a complex with KhpA.

The protein localises to the cytoplasm. Its function is as follows. A probable RNA chaperone. Forms a complex with KhpA which binds to cellular RNA and controls its expression. Plays a role in peptidoglycan (PG) homeostasis and cell length regulation. In Bacillus subtilis (strain 168), this protein is RNA-binding protein KhpB.